Here is a 591-residue protein sequence, read N- to C-terminus: Aspartate--tRNA(Asp/Asn) ligase (591 aa).

Glu175 serves as a coordination point for L-aspartate. Residues Gln199–Lys202 are aspartate. 2 residues coordinate L-aspartate: Arg221 and His453. Arg221–Glu223 contacts ATP. Glu486 lines the ATP pocket. Arg493 contributes to the L-aspartate binding site. Gly538–Arg541 is a binding site for ATP.

This sequence belongs to the class-II aminoacyl-tRNA synthetase family. Type 1 subfamily. In terms of assembly, homodimer.

The protein resides in the cytoplasm. The catalysed reaction is tRNA(Asx) + L-aspartate + ATP = L-aspartyl-tRNA(Asx) + AMP + diphosphate. Its function is as follows. Aspartyl-tRNA synthetase with relaxed tRNA specificity since it is able to aspartylate not only its cognate tRNA(Asp) but also tRNA(Asn). Reaction proceeds in two steps: L-aspartate is first activated by ATP to form Asp-AMP and then transferred to the acceptor end of tRNA(Asp/Asn). The polypeptide is Aspartate--tRNA(Asp/Asn) ligase (Cereibacter sphaeroides (strain KD131 / KCTC 12085) (Rhodobacter sphaeroides)).